We begin with the raw amino-acid sequence, 601 residues long: Elongation factor 4 (601 aa).

One can recognise a tr-type G domain in the interval 7–189; the sequence is RNIRNFSIIA…AIVHRIPPPA (183 aa). Residues 19–24 and 136–139 contribute to the GTP site; these read DHGKST and NKID.

This sequence belongs to the TRAFAC class translation factor GTPase superfamily. Classic translation factor GTPase family. LepA subfamily.

It is found in the cell inner membrane. It catalyses the reaction GTP + H2O = GDP + phosphate + H(+). Functionally, required for accurate and efficient protein synthesis under certain stress conditions. May act as a fidelity factor of the translation reaction, by catalyzing a one-codon backward translocation of tRNAs on improperly translocated ribosomes. Back-translocation proceeds from a post-translocation (POST) complex to a pre-translocation (PRE) complex, thus giving elongation factor G a second chance to translocate the tRNAs correctly. Binds to ribosomes in a GTP-dependent manner. The chain is Elongation factor 4 from Xanthomonas oryzae pv. oryzae (strain MAFF 311018).